The sequence spans 289 residues: ATP synthase subunit a (289 aa).

6 consecutive transmembrane segments (helical) span residues 43–63 (AFHVDTLGWSVALGLIFVLIF), 101–121 (SAVIAPLALTIFVWVFLMNAV), 160–180 (LSVFALIIFYSIKVKGIGGFI), 193–213 (LFVQALLIPVNFLLEFVTLIA), 232–252 (VFILIAVMFGSGLLWLSGLGV), and 259–279 (AVFHILIITLQAFIFMMLTIV).

The protein belongs to the ATPase A chain family. As to quaternary structure, F-type ATPases have 2 components, CF(1) - the catalytic core - and CF(0) - the membrane proton channel. CF(1) has five subunits: alpha(3), beta(3), gamma(1), delta(1), epsilon(1). CF(0) has three main subunits: a(1), b(2) and c(9-12). The alpha and beta chains form an alternating ring which encloses part of the gamma chain. CF(1) is attached to CF(0) by a central stalk formed by the gamma and epsilon chains, while a peripheral stalk is formed by the delta and b chains.

Its subcellular location is the cell inner membrane. Functionally, key component of the proton channel; it plays a direct role in the translocation of protons across the membrane. This Pseudomonas savastanoi pv. phaseolicola (strain 1448A / Race 6) (Pseudomonas syringae pv. phaseolicola (strain 1448A / Race 6)) protein is ATP synthase subunit a.